The sequence spans 193 residues: Putative 3-methyladenine DNA glycosylase (193 aa).

The protein belongs to the DNA glycosylase MPG family.

The chain is Putative 3-methyladenine DNA glycosylase from Agrobacterium fabrum (strain C58 / ATCC 33970) (Agrobacterium tumefaciens (strain C58)).